A 414-amino-acid polypeptide reads, in one-letter code: Solute carrier family 25 member 46-B (414 aa).

Over residues Met-1–Glu-13 the composition is skewed to basic and acidic residues. The tract at residues Met-1 to Ser-89 is disordered. Residues Tyr-29–Thr-50 are compositionally biased toward polar residues. One copy of the Solcar 1 repeat lies at Gln-92–Pro-183. 6 helical membrane-spanning segments follow: residues Phe-99 to Leu-119, Met-159 to Phe-179, His-198 to Ile-218, Leu-254 to Ile-274, Phe-310 to Leu-330, and Leu-379 to Leu-399. One copy of the Solcar 2 repeat lies at Glu-307 to Thr-412.

The protein belongs to the mitochondrial carrier (TC 2.A.29) family.

It is found in the mitochondrion outer membrane. Its function is as follows. May play a role in mitochondrial dynamics by controlling mitochondrial membrane fission. This chain is Solute carrier family 25 member 46-B (slc25a46-b), found in Xenopus laevis (African clawed frog).